We begin with the raw amino-acid sequence, 328 residues long: Phosphate acetyltransferase (328 aa).

This sequence belongs to the phosphate acetyltransferase and butyryltransferase family.

Its subcellular location is the cytoplasm. The catalysed reaction is acetyl-CoA + phosphate = acetyl phosphate + CoA. The protein operates within metabolic intermediate biosynthesis; acetyl-CoA biosynthesis; acetyl-CoA from acetate: step 2/2. In Staphylococcus aureus (strain MSSA476), this protein is Phosphate acetyltransferase (pta).